We begin with the raw amino-acid sequence, 384 residues long: Putative 8-amino-7-oxononanoate synthase (384 aa).

Residue arginine 22 coordinates substrate. 109–110 (GY) lines the pyridoxal 5'-phosphate pocket. Histidine 134 lines the substrate pocket. Residues serine 182, 207–210 (DDAH), and 236–239 (TLSK) contribute to the pyridoxal 5'-phosphate site. N6-(pyridoxal phosphate)lysine is present on lysine 239. Threonine 348 provides a ligand contact to substrate.

This sequence belongs to the class-II pyridoxal-phosphate-dependent aminotransferase family. BioF subfamily. Homodimer. Pyridoxal 5'-phosphate serves as cofactor.

It carries out the reaction 6-carboxyhexanoyl-[ACP] + L-alanine + H(+) = (8S)-8-amino-7-oxononanoate + holo-[ACP] + CO2. Its pathway is cofactor biosynthesis; biotin biosynthesis. Its function is as follows. Catalyzes the decarboxylative condensation of pimeloyl-[acyl-carrier protein] and L-alanine to produce 8-amino-7-oxononanoate (AON), [acyl-carrier protein], and carbon dioxide. The chain is Putative 8-amino-7-oxononanoate synthase (bioF) from Caulobacter vibrioides (strain ATCC 19089 / CIP 103742 / CB 15) (Caulobacter crescentus).